Reading from the N-terminus, the 157-residue chain is Dihydrofolate reductase type 15 (157 aa).

Residues 2–156 form the DHFR domain; that stretch reads KLSLMAAISK…INYSYQIWQK (155 aa).

It belongs to the dihydrofolate reductase family. As to quaternary structure, homodimer.

It catalyses the reaction (6S)-5,6,7,8-tetrahydrofolate + NADP(+) = 7,8-dihydrofolate + NADPH + H(+). It functions in the pathway cofactor biosynthesis; tetrahydrofolate biosynthesis; 5,6,7,8-tetrahydrofolate from 7,8-dihydrofolate: step 1/1. Key enzyme in folate metabolism. Catalyzes an essential reaction for de novo glycine and purine synthesis, and for DNA precursor synthesis. In Escherichia coli, this protein is Dihydrofolate reductase type 15 (dhfrXV).